Consider the following 830-residue polypeptide: MISARPWLLYLSVIQAFTTEAQPAESLHTEVPENYGGNFPFYILKLPLPLGRDEGHIVLSGDSNTADQNTFAVDTDSGFLVATRTLDREEKAEYQLQVTLESEDGRILWGPQLVTVHVKDENDQVPQFSQAIYRAQLSQGTRPGVPFLFLEASDGDAPGTANSDLRFHILSQSPPQPLPDMFQLDPHLGALALSPSGSTSLDHALEETYQLLVQVKDMGDQPSGHQAIATVEISIVENSWAPLEPVHLAENLKVVYPHSIAQVHWSGGDVHYQLESQPPGPFDVDTEGMLHVTMELDREAQAEYQLQVRAQNSHGEDYAEPLELQVVVMDENDNAPVCSPHDPTVNIPELSPPGTEIARLSAEDLDAPGSPNSHIVYQLLSPEPEEGAENKAFELDPTSGSVTLGTAPLHAGQSILLQVLAVDLAGSESGLSSTCEVTVMVTDVNNHAPEFINSQIGPVTLPEDVKPGALVATLMATDADLEPAFRLMDFAIEEGDPEGIFDLSWEPDSDHVQLRLRKNLSYEAAPDHKVVVVVSNIEELVGPGPGPAATATVTILVERVVAPLKLDQESYETSIPVSTPAGSLLLTIQPSDPMSRTLRFSLVNDSEGWLCIKEVSGEVHTAQSLQGAQPGDTYTVLVEAQDTDKPGLSTSATVVIHFLKASPVPALTLSAGPSRHLCTPRQDYGVVVSGVSEDPDLANRNGPYSFALGPNPTVQRDWRLQPLNDSHAYLTLALHWVEPGEYMVPVVVHHDTHMWQLQVKVIVCRCNVEGQCMRKVGRMKGMPTKLSAVGVLLGTLAAIGFILILVFTHLALARKDLDQPADSVPLKAAV.

Positions 1–21 are cleaved as a signal peptide; that stretch reads MISARPWLLYLSVIQAFTTEA. The Extracellular portion of the chain corresponds to 22 to 788; sequence QPAESLHTEV…MKGMPTKLSA (767 aa). Cadherin domains are found at residues 27 to 128, 133 to 237, 244 to 338, 343 to 451, 457 to 566, and 571 to 667; these read LHTE…VPQF, YRAQ…SIVE, EPVH…APVC, PTVN…APEF, GPVT…PLKL, and YETS…VPAL. 3 N-linked (GlcNAc...) asparagine glycosylation sites follow: N519, N604, and N724. The tract at residues 668–788 is ectodomain G; that stretch reads TLSAGPSRHL…MKGMPTKLSA (121 aa). Residues 789–809 form a helical membrane-spanning segment; the sequence is VGVLLGTLAAIGFILILVFTH. At 810 to 830 the chain is on the cytoplasmic side; the sequence is LALARKDLDQPADSVPLKAAV. Position 823 is a phosphoserine (S823).

Kidney specific.

The protein resides in the cell membrane. Its function is as follows. Cadherins are calcium-dependent cell adhesion proteins. They preferentially interact with themselves in a homophilic manner in connecting cells; cadherins may thus contribute to the sorting of heterogeneous cell types. This Mus musculus (Mouse) protein is Cadherin-16 (Cdh16).